A 246-amino-acid polypeptide reads, in one-letter code: MNNNTTAPTYTLRGLQLIGWRDMQHALDYLFADGQLKQGTLVAINAEKMLTIEENAEVRELINAAEFKYADGISVVRSVRKKYPQAQVSRVAGADLWEELMARAGKEGTTVFLVGGKPEVLAQTEAKLRNQWNVNIVGSQDGYFKPEQRQALFERIHASGAQIVTVAMGSPKQEIFMRDCRLVHPDALYMGVGGTYDVFTGHVKRAPKIWQTLGLEWLYRLLSQPSRIKRQLRLLRYLRWHYTGNL.

It belongs to the glycosyltransferase 26 family.

It catalyses the reaction UDP-N-acetyl-alpha-D-mannosaminouronate + N-acetyl-alpha-D-glucosaminyl-di-trans,octa-cis-undecaprenyl diphosphate = beta-D-ManNAcA-(1-&gt;4)-alpha-D-GlcNAc-di-trans,octa-cis-undecaprenyl diphosphate + UDP + H(+). The protein operates within bacterial outer membrane biogenesis; enterobacterial common antigen biosynthesis. Catalyzes the synthesis of Und-PP-GlcNAc-ManNAcA (Lipid II), the second lipid-linked intermediate involved in enterobacterial common antigen (ECA) synthesis. The chain is UDP-N-acetyl-D-mannosaminuronic acid transferase from Escherichia coli O157:H7.